Consider the following 555-residue polypeptide: Potassium-transporting ATPase potassium-binding subunit (555 aa).

The next 10 membrane-spanning stretches (helical) occupy residues 2 to 22, 60 to 80, 130 to 150, 173 to 193, 246 to 266, 278 to 298, 374 to 394, 412 to 432, 483 to 503, and 525 to 545; these read IWVAVVITMLLFILVAKPTGI, QYALSLVLLNGFMIVVVYFIF, IGITFLMFAAPATTLALVMAF, VFLPIAFIAALVFVALGVPQT, MSNILQMMLMMLLPTALPFTY, ILFVSLFMVFLLGFITITTSE, AGFVNIIMYAIIAVFISGLMV, LIAVTILFHPLLILGFSALAL, LVMFLGRYFSLITMLAVAASL, and GIFIGTIVIVGALTFFPMLVL.

This sequence belongs to the KdpA family. The system is composed of three essential subunits: KdpA, KdpB and KdpC.

It localises to the cell membrane. Its function is as follows. Part of the high-affinity ATP-driven potassium transport (or Kdp) system, which catalyzes the hydrolysis of ATP coupled with the electrogenic transport of potassium into the cytoplasm. This subunit binds the extracellular potassium ions and delivers the ions to the membrane domain of KdpB through an intramembrane tunnel. This is Potassium-transporting ATPase potassium-binding subunit from Bacillus cereus (strain 03BB102).